The following is a 245-amino-acid chain: tRNA1(Val) (adenine(37)-N6)-methyltransferase (245 aa).

This sequence belongs to the methyltransferase superfamily. tRNA (adenine-N(6)-)-methyltransferase family.

It is found in the cytoplasm. It carries out the reaction adenosine(37) in tRNA1(Val) + S-adenosyl-L-methionine = N(6)-methyladenosine(37) in tRNA1(Val) + S-adenosyl-L-homocysteine + H(+). In terms of biological role, specifically methylates the adenine in position 37 of tRNA(1)(Val) (anticodon cmo5UAC). The protein is tRNA1(Val) (adenine(37)-N6)-methyltransferase of Escherichia coli O157:H7.